Consider the following 216-residue polypeptide: Probable nicotinate-nucleotide adenylyltransferase (216 aa).

It belongs to the NadD family.

The enzyme catalyses nicotinate beta-D-ribonucleotide + ATP + H(+) = deamido-NAD(+) + diphosphate. Its pathway is cofactor biosynthesis; NAD(+) biosynthesis; deamido-NAD(+) from nicotinate D-ribonucleotide: step 1/1. In terms of biological role, catalyzes the reversible adenylation of nicotinate mononucleotide (NaMN) to nicotinic acid adenine dinucleotide (NaAD). This is Probable nicotinate-nucleotide adenylyltransferase from Shewanella baltica (strain OS185).